We begin with the raw amino-acid sequence, 807 residues long: Sucrose synthase 1 (807 aa).

Residues 272 to 748 form a GT-B glycosyltransferase region; the sequence is MMFNVVILSP…GLKRIYEKYT (477 aa).

This sequence belongs to the glycosyltransferase 1 family. Plant sucrose synthase subfamily. In terms of assembly, forms homotetramers. In endosperm it forms both homotetramers and heterotetramers with SS2, all three possible heterotetramers are formed. As to expression, highly expressed in developing endosperm and in roots and, at lower levels, in coleoptiles and aleurone. In 3 day old roots it is detected in cap cells and along the vascular strand, starting just after the meristemic region. In 9 day old leaves it is found in the phloem. In seeds it is distributed throughout the endosperm and also found in the assimilate-unloading tissues, the nucellar projection, the vascular area and at a high concentration in the chalazal region.

It carries out the reaction an NDP-alpha-D-glucose + D-fructose = a ribonucleoside 5'-diphosphate + sucrose + H(+). Functionally, sucrose-cleaving enzyme that provides UDP-glucose and fructose for various metabolic pathways. This chain is Sucrose synthase 1 (SS1), found in Hordeum vulgare (Barley).